The chain runs to 369 residues: DNA replication and repair protein RecF (369 aa).

30–37 (GINAQGKT) serves as a coordination point for ATP.

The protein belongs to the RecF family.

It localises to the cytoplasm. Functionally, the RecF protein is involved in DNA metabolism; it is required for DNA replication and normal SOS inducibility. RecF binds preferentially to single-stranded, linear DNA. It also seems to bind ATP. The sequence is that of DNA replication and repair protein RecF from Macrococcus caseolyticus (strain JCSC5402) (Macrococcoides caseolyticum).